Consider the following 324-residue polypeptide: Glyoxylate/hydroxypyruvate reductase B (324 aa).

Catalysis depends on residues Arg-237 and Glu-266. Residue His-285 is the Proton donor of the active site.

Belongs to the D-isomer specific 2-hydroxyacid dehydrogenase family. GhrB subfamily. As to quaternary structure, homodimer.

Its subcellular location is the cytoplasm. The enzyme catalyses glycolate + NADP(+) = glyoxylate + NADPH + H(+). It carries out the reaction (R)-glycerate + NAD(+) = 3-hydroxypyruvate + NADH + H(+). It catalyses the reaction (R)-glycerate + NADP(+) = 3-hydroxypyruvate + NADPH + H(+). Functionally, catalyzes the NADPH-dependent reduction of glyoxylate and hydroxypyruvate into glycolate and glycerate, respectively. The sequence is that of Glyoxylate/hydroxypyruvate reductase B from Escherichia coli O9:H4 (strain HS).